The sequence spans 430 residues: Gamma-glutamyl phosphate reductase (430 aa).

It belongs to the gamma-glutamyl phosphate reductase family.

The protein localises to the cytoplasm. It carries out the reaction L-glutamate 5-semialdehyde + phosphate + NADP(+) = L-glutamyl 5-phosphate + NADPH + H(+). It participates in amino-acid biosynthesis; L-proline biosynthesis; L-glutamate 5-semialdehyde from L-glutamate: step 2/2. In terms of biological role, catalyzes the NADPH-dependent reduction of L-glutamate 5-phosphate into L-glutamate 5-semialdehyde and phosphate. The product spontaneously undergoes cyclization to form 1-pyrroline-5-carboxylate. The protein is Gamma-glutamyl phosphate reductase of Rhodopseudomonas palustris (strain BisB5).